Reading from the N-terminus, the 274-residue chain is NH(3)-dependent NAD(+) synthetase (274 aa).

Position 46 to 53 (46 to 53 (GISGGQDS)) interacts with ATP. D52 provides a ligand contact to Mg(2+). R140 lines the deamido-NAD(+) pocket. T160 provides a ligand contact to ATP. Mg(2+) is bound at residue E165. Residues K173 and D180 each contribute to the deamido-NAD(+) site. K189 and T211 together coordinate ATP. Residue 260 to 261 (HK) participates in deamido-NAD(+) binding.

The protein belongs to the NAD synthetase family. In terms of assembly, homodimer.

It catalyses the reaction deamido-NAD(+) + NH4(+) + ATP = AMP + diphosphate + NAD(+) + H(+). The protein operates within cofactor biosynthesis; NAD(+) biosynthesis; NAD(+) from deamido-NAD(+) (ammonia route): step 1/1. Its function is as follows. Catalyzes the ATP-dependent amidation of deamido-NAD to form NAD. Uses ammonia as a nitrogen source. This is NH(3)-dependent NAD(+) synthetase from Streptococcus sanguinis (strain SK36).